The following is a 475-amino-acid chain: MMEFNERPFHFIGIGGIGMSALAYILAKKGLRVSGSDLRPNRLTEQLAELGVQIFIGQSAANLERYPFTPLPQVICSSAIRSDNPEYLAAQHLGCPIFHRSDVLAALMHRSQSIAVAGTHGKTTTSSMIAYLLLQAGLDPTIIVGGEVAAWQGNARVGQSRYLVAEADESDGSLRKFHPHIGVITNIELDHPDHYNSLEEVVATFQQFADQAEIVIACADCPNIRDRLHHPRLLTYSLQRQAAVDYCVDHIQYTAEGTTARVWERGTSLGILQLNVLGAHNLQNALAVIAVGRYLGIDFATIAAALLEFRGARRRFEERGQVNGIRFIDDYAHHPSEIMATLEAARLQVGTQTPWQRIVAVFQPHRYSRTQTLLKAFGQCFTAADHVIFTDIYSAGEPDPGTISGADVATCARQYHASVDYCPTLEAVQTRLAHLLQPGDLVIFLGAGNLNQLIPSVMADQEQFSVSSLTEAIAL.

118–124 lines the ATP pocket; that stretch reads GTHGKTT.

Belongs to the MurCDEF family.

The protein resides in the cytoplasm. It carries out the reaction UDP-N-acetyl-alpha-D-muramate + L-alanine + ATP = UDP-N-acetyl-alpha-D-muramoyl-L-alanine + ADP + phosphate + H(+). The protein operates within cell wall biogenesis; peptidoglycan biosynthesis. Its function is as follows. Cell wall formation. In Thermosynechococcus vestitus (strain NIES-2133 / IAM M-273 / BP-1), this protein is UDP-N-acetylmuramate--L-alanine ligase.